We begin with the raw amino-acid sequence, 160 residues long: Small ribosomal subunit protein uS7B (160 aa).

Belongs to the universal ribosomal protein uS7 family. Part of the 30S ribosomal subunit. Contacts proteins S9 and S11.

In terms of biological role, one of the primary rRNA binding proteins, it binds directly to 16S rRNA where it nucleates assembly of the head domain of the 30S subunit. Is located at the subunit interface close to the decoding center, probably blocks exit of the E-site tRNA. The polypeptide is Small ribosomal subunit protein uS7B (Aquifex aeolicus (strain VF5)).